The sequence spans 1101 residues: Error-prone DNA polymerase (1101 aa).

Positions 1055-1101 are disordered; sequence ADLGHPMDSAVGQTTPQTDSAPRPRPQPRAMHPREQAKRLFPSRDFH. Residues 1065–1074 are compositionally biased toward polar residues; sequence VGQTTPQTDS. Over residues 1086–1101 the composition is skewed to basic and acidic residues; it reads HPREQAKRLFPSRDFH.

The protein belongs to the DNA polymerase type-C family. DnaE2 subfamily.

Its subcellular location is the cytoplasm. The catalysed reaction is DNA(n) + a 2'-deoxyribonucleoside 5'-triphosphate = DNA(n+1) + diphosphate. Its function is as follows. DNA polymerase involved in damage-induced mutagenesis and translesion synthesis (TLS). It is not the major replicative DNA polymerase. The chain is Error-prone DNA polymerase from Ruegeria pomeroyi (strain ATCC 700808 / DSM 15171 / DSS-3) (Silicibacter pomeroyi).